The primary structure comprises 281 residues: Probable replication-associated protein repA1 (281 aa).

The protein belongs to the IncFII RepA family.

Functionally, this protein is essential for plasmid replication; it is involved in copy control functions. The protein is Probable replication-associated protein repA1 (repA1) of Buchnera aphidicola subsp. Cinara cedri (strain Cc).